The primary structure comprises 350 residues: MVDGTLLLLLSEALALTQTWAGSHSLKYFHTSVSRPGRGEPRFISVGYVDDTQFVRFDNDAASPRMVPRAPWMEQEGSEYWDRETRSARDTAQIFRVNLRTLRGYYNQSEAGSHTLQWMHGCDLGPDGRFLRGYEQFAYDGKDYLTLNEDLRSWTAVDTAAQISERKSNDACEAEHQRAYLEDTCVEWLHKYLEKGKETLLHLEPPKTHVTHHPISDHEATLRCWALGFYPAEITLTWQQDGEGHTQDTELVDTRPAGDGTFQKWAAVVVPSGEEQRYTCHVQHEGLPEPLTLRWKPASQPTIPIVGIIAGLVLLGSVVSGAVVAAVMWRKKSSGGKGRSYSKAEWSDSA.

The signal sequence occupies residues 1–21 (MVDGTLLLLLSEALALTQTWA). An alpha-1 region spans residues 22-111 (GSHSLKYFHT…LRGYYNQSEA (90 aa)). Topologically, residues 22 to 305 (GSHSLKYFHT…KPASQPTIPI (284 aa)) are extracellular. N107 carries N-linked (GlcNAc...) asparagine glycosylation. The segment at 112–203 (GSHTLQWMHG…EKGKETLLHL (92 aa)) is alpha-2. Disulfide bonds link C122–C185 and C224–C280. The interval 204–295 (EPPKTHVTHH…GLPEPLTLRW (92 aa)) is alpha-3. In terms of domain architecture, Ig-like C1-type spans 206–294 (PKTHVTHHPI…EGLPEPLTLR (89 aa)). The tract at residues 296–305 (KPASQPTIPI) is connecting peptide. A helical membrane pass occupies residues 306-329 (VGIIAGLVLLGSVVSGAVVAAVMW). The Cytoplasmic segment spans residues 330–350 (RKKSSGGKGRSYSKAEWSDSA).

Belongs to the MHC class I family. Heterodimer of an alpha chain and a beta chain (beta-2-microglobulin).

The protein resides in the membrane. Its function is as follows. Preferably binds to a peptide derived from the signal sequence of most HLA-A, -B, -C and -G molecules. In Pan troglodytes (Chimpanzee), this protein is Patr class I histocompatibility antigen, alpha chain E (Patr-E).